The following is a 132-amino-acid chain: Global transcriptional regulator Spx (132 aa).

Cysteine 10 and cysteine 13 are oxidised to a cystine.

Belongs to the ArsC family. Spx subfamily. In terms of assembly, interacts with the C-terminal domain of the alpha subunit of the RNAP.

Its subcellular location is the cytoplasm. Global transcriptional regulator that plays a key role in stress response and exerts either positive or negative regulation of genes. Acts by interacting with the C-terminal domain of the alpha subunit of the RNA polymerase (RNAP). This interaction can enhance binding of RNAP to the promoter region of target genes and stimulate their transcription, or block interaction of RNAP with activator. The polypeptide is Global transcriptional regulator Spx (Lactiplantibacillus plantarum (strain ATCC BAA-793 / NCIMB 8826 / WCFS1) (Lactobacillus plantarum)).